Reading from the N-terminus, the 2032-residue chain is Transient receptor potential channel (2032 aa).

The segment covering 129–139 has biased composition (basic residues); sequence KKTRKHRRRRS. 5 disordered regions span residues 129–162, 197–223, 831–860, 912–945, and 1120–1211; these read KKTRKHRRRRSGSFTGGVYPRKGHRNRSLLGHAI, QSKGGDQVPPTSTTTGGAGGDGNAVPT, KKAMGVFSSRPSRTGSGIASRQSTEGMGGV, ANPMRPPNLGDSRDCGSEFDEELSLTSASDGSQT, and AAEH…EAGN. Composition is skewed to polar residues over residues 839–855, 935–945, and 1120–1129; these read SRPSRTGSGIASRQSTE, SLTSASDGSQT, and AAEHQNDMNY. Low complexity predominate over residues 1130–1149; that stretch reads SSSSSSSSSSSSSSSSSDSS. The span at 1171–1185 shows a compositional bias: polar residues; sequence TSQGSAQSLNITSLF. Helical transmembrane passes span 1310-1330, 1332-1352, 1374-1394, 1439-1459, and 1535-1555; these read FWSWTISFILFITFFTYTLLV, TPPRPTVIEYILIAYVAAFGL, VCSFWNCVTILAIIFYIVGFF, MIQNMSYIIVMLVVTLLSFGL, and LMTFFLLIANILLMSMLIAIF. 4 disordered regions span residues 1753–1779, 1853–1909, 1935–1982, and 1999–2032; these read GTDPILEEKDHDSGENSNSLPPGRIRR, HPER…SRDQ, EEED…EEVD, and LNEEEQAGAPHSTPVIASPSSSRADLTSQKCSDV. A compositionally biased stretch (acidic residues) spans 1935-1947; the sequence is EEEDEEEDDEEDD. The segment covering 1951–1962 has biased composition (basic residues); that stretch reads RHHIHPRRKSSR. Polar residues predominate over residues 2016-2032; that stretch reads SPSSSRADLTSQKCSDV.

This sequence belongs to the transient receptor (TC 1.A.4) family. LTrpC subfamily. Gonads.

It is found in the membrane. Required for initiation and continuation of postembryonic mitotic cell divisions of gonadal cells Z1 and Z4. Zygotic expression is necessary for hermaphrodite fertility. May be a cation channel. The polypeptide is Transient receptor potential channel (gon-2) (Caenorhabditis elegans).